A 746-amino-acid polypeptide reads, in one-letter code: Polyribonucleotide nucleotidyltransferase (746 aa).

Mg(2+) contacts are provided by Asp493 and Asp499. In terms of domain architecture, KH spans 560 to 619 (PRIITLQINPEKIGALIGPGGKTIRSITEATGAQIDIEEDGRVYISTADAAAAQQAVAMV). Residues 629–698 (GDIFLGKVVR…GTGKVSLSRR (70 aa)) enclose the S1 motif domain. The segment at 704–746 (ETAEDRRAAGAGRGLRDGGRSSGSERSGDRSPRSDDRPRPRRR) is disordered. Basic and acidic residues-rich tracts occupy residues 706–722 (AEDR…RDGG) and 729–746 (RSGD…PRRR).

It belongs to the polyribonucleotide nucleotidyltransferase family. Mg(2+) serves as cofactor.

The protein localises to the cytoplasm. It catalyses the reaction RNA(n+1) + phosphate = RNA(n) + a ribonucleoside 5'-diphosphate. In terms of biological role, involved in mRNA degradation. Catalyzes the phosphorolysis of single-stranded polyribonucleotides processively in the 3'- to 5'-direction. This is Polyribonucleotide nucleotidyltransferase from Roseiflexus castenholzii (strain DSM 13941 / HLO8).